Reading from the N-terminus, the 322-residue chain is Cytochrome c biogenesis protein CcsA (322 aa).

8 consecutive transmembrane segments (helical) span residues 17 to 37 (VVSI…IVGL), 44 to 64 (GMIA…IYLG), 71 to 91 (LYES…VPYF), 98 to 118 (LSAL…SGLL), 143 to 163 (MVLG…LLVI), 225 to 245 (VISL…VWAN), 258 to 273 (ETWA…IYLH), and 286 to 306 (AIVA…VNLL).

This sequence belongs to the CcmF/CycK/Ccl1/NrfE/CcsA family. As to quaternary structure, may interact with Ccs1.

It localises to the plastid. The protein resides in the chloroplast thylakoid membrane. Its function is as follows. Required during biogenesis of c-type cytochromes (cytochrome c6 and cytochrome f) at the step of heme attachment. The protein is Cytochrome c biogenesis protein CcsA of Vitis vinifera (Grape).